The primary structure comprises 246 residues: E3 ubiquitin-protein ligase LubX (246 aa).

2 consecutive U-box domains span residues 36–109 and 131–204; these read TTPT…QTNY and EIPD…RKRE.

In terms of assembly, interacts with host CLK1. Post-translationally, ubiquitinated in the presence of host E1 ubiquitin-activating enzyme, E2 ubiquitin-conjugating enzyme (UBE2D1 or UBE2D3) and ubiquitin.

The protein localises to the secreted. It is found in the host cell. It catalyses the reaction S-ubiquitinyl-[E2 ubiquitin-conjugating enzyme]-L-cysteine + [acceptor protein]-L-lysine = [E2 ubiquitin-conjugating enzyme]-L-cysteine + N(6)-ubiquitinyl-[acceptor protein]-L-lysine.. Effector proteins function to alter host cell physiology and promote bacterial survival in host tissues. This protein is an E3 ubiquitin ligase that interferes with host's ubiquitination pathway. Acts in conjunction with host E2 ubiquitin-conjugating enzymes UBE2D1 (UBCH5A) or UBE2D3 (UBCH5C), and mediates polyubiquitination of host kinase CLK1. This chain is E3 ubiquitin-protein ligase LubX (lubX), found in Legionella pneumophila subsp. pneumophila (strain Philadelphia 1 / ATCC 33152 / DSM 7513).